The chain runs to 304 residues: Acetylglutamate kinase (304 aa).

Substrate-binding positions include 71-72, arginine 93, and asparagine 193; that span reads GG.

Belongs to the acetylglutamate kinase family. ArgB subfamily.

The protein resides in the cytoplasm. The catalysed reaction is N-acetyl-L-glutamate + ATP = N-acetyl-L-glutamyl 5-phosphate + ADP. It functions in the pathway amino-acid biosynthesis; L-arginine biosynthesis; N(2)-acetyl-L-ornithine from L-glutamate: step 2/4. Its function is as follows. Catalyzes the ATP-dependent phosphorylation of N-acetyl-L-glutamate. The chain is Acetylglutamate kinase from Streptomyces avermitilis (strain ATCC 31267 / DSM 46492 / JCM 5070 / NBRC 14893 / NCIMB 12804 / NRRL 8165 / MA-4680).